Consider the following 60-residue polypeptide: Potassium channel toxin alpha-KTx 3.6 (60 aa).

The N-terminal stretch at 1–22 (MKVFFAVLITLFICSMIIGIHG) is a signal peptide. Cystine bridges form between Cys-29-Cys-49, Cys-35-Cys-54, and Cys-39-Cys-56. At Lys-59 the chain carries Lysine amide.

Belongs to the short scorpion toxin superfamily. Potassium channel inhibitor family. Alpha-KTx 03 subfamily. Expressed by the venom gland.

Its subcellular location is the secreted. Its function is as follows. Blocks voltage-gated potassium channels. At 2 uM, blocks rat Kv1.1/KCNA1 and Kv1.3/KCNA3, has a strong effect on rat Kv1.2/KCNA2 and Kv1.6/KCNA6 as well as a moderate effect on Shaker IR. The protein is Potassium channel toxin alpha-KTx 3.6 of Olivierus martensii (Manchurian scorpion).